The sequence spans 221 residues: Type 3 secretion system stator protein (221 aa).

This sequence belongs to the SctL stator family. The core secretion machinery of the T3SS is composed of approximately 20 different proteins, including cytoplasmic components, a base, an export apparatus and a needle. This subunit is part of the cytosolic complex. Interacts directly with YscN/SctN (T3SS ATPase) and YscQ/SctQ (the major sorting platform component).

The protein resides in the cytoplasm. In terms of biological role, component of the type III secretion system (T3SS), also called injectisome, which is used to inject bacterial effector proteins into eukaryotic host cells. Acts as a regulator of the YscN/SctN ATPase activity. In Yersinia pestis, this protein is Type 3 secretion system stator protein.